The following is a 64-amino-acid chain: Prokaryotic ubiquitin-like protein Pup (64 aa).

Over residues 1–10 (MNQNGSQIHS) the composition is skewed to polar residues. Residues 1 to 32 (MNQNGSQIHSDGNGHSDDTDTPGVSAGQVSVN) are disordered. Residues 20 to 58 (DTPGVSAGQVSVNTAGVDDLLDEIDGLLESNAEEFVRSY) are ARC ATPase binding. Gln-64 bears the Deamidated glutamine mark. Gln-64 is covalently cross-linked (Isoglutamyl lysine isopeptide (Gln-Lys) (interchain with K-? in acceptor proteins)).

It belongs to the prokaryotic ubiquitin-like protein family. Strongly interacts with the proteasome-associated ATPase ARC through a hydrophobic interface; the interacting region of Pup lies in its C-terminal half. There is one Pup binding site per ARC hexamer ring. In terms of processing, is modified by deamidation of its C-terminal glutamine to glutamate by the deamidase Dop, a prerequisite to the subsequent pupylation process.

The protein operates within protein degradation; proteasomal Pup-dependent pathway. In terms of biological role, protein modifier that is covalently attached to lysine residues of substrate proteins, thereby targeting them for proteasomal degradation. The tagging system is termed pupylation. In Corynebacterium diphtheriae (strain ATCC 700971 / NCTC 13129 / Biotype gravis), this protein is Prokaryotic ubiquitin-like protein Pup.